The sequence spans 232 residues: U-scoloptoxin(11)-Ssd2a (232 aa).

The N-terminal stretch at 1–21 is a signal peptide; the sequence is MFQFCLLILLLAPGRFFSALG. A propeptide spanning residues 22-32 is cleaved from the precursor; sequence KPQETLTVENR.

In terms of processing, contains 8 disulfide bonds. In terms of tissue distribution, expressed by the venom gland.

It is found in the secreted. The polypeptide is U-scoloptoxin(11)-Ssd2a (Scolopendra dehaani (Thai centipede)).